The sequence spans 1163 residues: Carbamoyl phosphate synthase large chain (1163 aa).

A carboxyphosphate synthetic domain region spans residues 1–456; sequence MPKRQDIKSI…SLQKALRGLE (456 aa). An ATP-binding site is contributed by arginine 129. The tract at residues 148-170 is disordered; the sequence is LANATDIKDHDRKSHEAERSALK. Over residues 153–170 the composition is skewed to basic and acidic residues; that stretch reads DIKDHDRKSHEAERSALK. One can recognise an ATP-grasp 1 domain in the interval 185 to 381; that stretch reads LENQWNLGEG…IAKIAAKLAV (197 aa). ATP contacts are provided by arginine 222, glycine 228, glycine 229, glutamate 261, valine 263, glutamate 268, glycine 294, valine 295, histidine 296, glutamine 338, and glutamate 352. Mg(2+) contacts are provided by glutamine 338, glutamate 352, and asparagine 354. Positions 338, 352, and 354 each coordinate Mn(2+). The tract at residues 457-614 is oligomerization domain; it reads TGLTGLDEIE…PFVGAARSEA (158 aa). Residues 615 to 1026 form a carbamoyl phosphate synthetic domain region; the sequence is QVSDRKKVVI…AFAKSQLGAG (412 aa). The region spanning 743–955 is the ATP-grasp 2 domain; it reads QKLLMKLDLN…IAKIAARVMA (213 aa). Residues arginine 779, serine 839, leucine 841, glutamate 846, glycine 871, isoleucine 872, histidine 873, serine 874, glutamine 914, and glutamate 926 each contribute to the ATP site. Mg(2+) contacts are provided by glutamine 914, glutamate 926, and asparagine 928. 3 residues coordinate Mn(2+): glutamine 914, glutamate 926, and asparagine 928. Residues 1027–1163 enclose the MGS-like domain; sequence VDLPRDGTVF…VRPLQSYFET (137 aa). The allosteric domain stretch occupies residues 1027–1163; the sequence is VDLPRDGTVF…VRPLQSYFET (137 aa).

The protein belongs to the CarB family. Composed of two chains; the small (or glutamine) chain promotes the hydrolysis of glutamine to ammonia, which is used by the large (or ammonia) chain to synthesize carbamoyl phosphate. Tetramer of heterodimers (alpha,beta)4. Mg(2+) serves as cofactor. Mn(2+) is required as a cofactor.

The catalysed reaction is hydrogencarbonate + L-glutamine + 2 ATP + H2O = carbamoyl phosphate + L-glutamate + 2 ADP + phosphate + 2 H(+). The enzyme catalyses hydrogencarbonate + NH4(+) + 2 ATP = carbamoyl phosphate + 2 ADP + phosphate + 2 H(+). The protein operates within amino-acid biosynthesis; L-arginine biosynthesis; carbamoyl phosphate from bicarbonate: step 1/1. It functions in the pathway pyrimidine metabolism; UMP biosynthesis via de novo pathway; (S)-dihydroorotate from bicarbonate: step 1/3. Large subunit of the glutamine-dependent carbamoyl phosphate synthetase (CPSase). CPSase catalyzes the formation of carbamoyl phosphate from the ammonia moiety of glutamine, carbonate, and phosphate donated by ATP, constituting the first step of 2 biosynthetic pathways, one leading to arginine and/or urea and the other to pyrimidine nucleotides. The large subunit (synthetase) binds the substrates ammonia (free or transferred from glutamine from the small subunit), hydrogencarbonate and ATP and carries out an ATP-coupled ligase reaction, activating hydrogencarbonate by forming carboxy phosphate which reacts with ammonia to form carbamoyl phosphate. This chain is Carbamoyl phosphate synthase large chain, found in Rhizobium meliloti (strain 1021) (Ensifer meliloti).